The primary structure comprises 768 residues: Polyadenylate-binding protein, cytoplasmic and nuclear (768 aa).

Residues 1–11 (MSAETATNPPV) are compositionally biased toward polar residues. Residues 1 to 52 (MSAETATNPPVDTTPGAAPESATNGSNANVAADTTAGEASQTTSSTTPTAQP) are disordered. The segment covering 39-52 (ASQTTSSTTPTAQP) has biased composition (low complexity). RRM domains lie at 55–133 (ASLY…WSQR), 143–220 (GNVF…HHIA), 236–314 (TNVY…RAQK), and 340–470 (VNLY…LAQR). Disordered regions lie at residues 374–428 (DFAP…EKKP), 633–662 (QQGM…NASP), and 739–768 (KNKG…ETKS). Over residues 637 to 646 (GRPGQAGRGQ) the composition is skewed to gly residues. The 78-residue stretch at 662-739 (PNGLTLQVLN…ALTVYDEYVK (78 aa)) folds into the PABC domain. The span at 753–768 (NKSKDASQETAEETKS) shows a compositional bias: basic and acidic residues.

Belongs to the polyadenylate-binding protein type-1 family.

It is found in the cytoplasm. Its subcellular location is the nucleus. In terms of biological role, binds the poly(A) tail of mRNA. Appears to be an important mediator of the multiple roles of the poly(A) tail in mRNA biogenesis, stability and translation. In the nucleus, involved in both mRNA cleavage and polyadenylation. Is also required for efficient mRNA export to the cytoplasm. Acts in concert with a poly(A)-specific nuclease (PAN) to affect poly(A) tail shortening, which may occur concomitantly with either nucleocytoplasmic mRNA transport or translational initiation. In the cytoplasm, stimulates translation initiation and regulates mRNA decay through translation termination-coupled poly(A) shortening, probably mediated by PAN. This Coccidioides immitis (strain RS) (Valley fever fungus) protein is Polyadenylate-binding protein, cytoplasmic and nuclear (PAB1).